The sequence spans 698 residues: Elongation factor G 1 (698 aa).

In terms of domain architecture, tr-type G spans Glu-8–Thr-290. GTP-binding positions include Ala-17–Thr-24, Asp-88–His-92, and Asn-142–Asp-145.

This sequence belongs to the TRAFAC class translation factor GTPase superfamily. Classic translation factor GTPase family. EF-G/EF-2 subfamily.

Its subcellular location is the cytoplasm. Its function is as follows. Catalyzes the GTP-dependent ribosomal translocation step during translation elongation. During this step, the ribosome changes from the pre-translocational (PRE) to the post-translocational (POST) state as the newly formed A-site-bound peptidyl-tRNA and P-site-bound deacylated tRNA move to the P and E sites, respectively. Catalyzes the coordinated movement of the two tRNA molecules, the mRNA and conformational changes in the ribosome. This chain is Elongation factor G 1, found in Vibrio cholerae serotype O1 (strain ATCC 39315 / El Tor Inaba N16961).